Here is a 636-residue protein sequence, read N- to C-terminus: Chaperone protein HtpG (636 aa).

An a; substrate-binding region spans residues 1-342; that stretch reads MSGETLEFQA…AHDLSLNISR (342 aa). The tract at residues 343–558 is b; the sequence is ELLQQDRQIQ…AHDVTPTLEK (216 aa). Positions 559 to 636 are c; it reads MYRAMGHEVP…ILAERLARTL (78 aa).

The protein belongs to the heat shock protein 90 family. In terms of assembly, homodimer.

The protein localises to the cytoplasm. Functionally, molecular chaperone. Has ATPase activity. The chain is Chaperone protein HtpG from Salinispora arenicola (strain CNS-205).